The primary structure comprises 160 residues: Major strawberry allergen Fra a 1-E (160 aa).

The protein belongs to the BetVI family. In terms of assembly, monomer. Interacts with AP. Highly expressed in roots. Expressed in open flowers. Expressed at low levels in leaves, flower buds and fruits.

Its function is as follows. Involved in the control of flavonoid biosynthesis in fruits, probably by binding directly to natural flavonoids. Binds the natural flavonoid quercetin-3-O-glucuronide with affinities in the low micromolar range. This is Major strawberry allergen Fra a 1-E from Fragaria ananassa (Strawberry).